The sequence spans 328 residues: Interleukin-12 subunit beta (328 aa).

Residues 1 to 22 (MCHQQLVISWFSLVFLASPLMA) form the signal peptide. The Ig-like C2-type domain maps to 29–106 (DVYVVELDWY…LSHSLLLLHK (78 aa)). An intrachain disulfide couples Cys50 to Cys90. 4 N-linked (GlcNAc...) asparagine glycosylation sites follow: Asn125, Asn135, Asn222, and Asn303. The 92-residue stretch at 237 to 328 (PPKNLQLKPL…WSEWASVPCS (92 aa)) folds into the Fibronectin type-III domain.

The protein belongs to the IL-12B family. In terms of assembly, heterodimer with IL12A; disulfide-linked. The heterodimer is known as interleukin IL-12. Heterodimer with IL23A; disulfide-linked. The heterodimer is known as interleukin IL-23. Also secreted as a monomer. Interacts with NBR1; this interaction promotes IL-12 secretion.

The protein resides in the secreted. Functionally, cytokine that can act as a growth factor for activated T and NK cells, enhance the lytic activity of NK/lymphokine-activated killer cells, and stimulate the production of IFN-gamma by resting PBMC. In terms of biological role, associates with IL23A to form the IL-23 interleukin, a heterodimeric cytokine which functions in innate and adaptive immunity. IL-23 may constitute with IL-17 an acute response to infection in peripheral tissues. IL-23 binds to a heterodimeric receptor complex composed of IL12RB1 and IL23R, activates the Jak-Stat signaling cascade, stimulates memory rather than naive T-cells and promotes production of pro-inflammatory cytokines. IL-23 induces autoimmune inflammation and thus may be responsible for autoimmune inflammatory diseases and may be important for tumorigenesis. The protein is Interleukin-12 subunit beta (IL12B) of Papio anubis (Olive baboon).